The sequence spans 555 residues: Potassium-transporting ATPase potassium-binding subunit (555 aa).

10 consecutive transmembrane segments (helical) span residues 2 to 22 (IWVA…PTGI), 60 to 80 (QYAL…YFVF), 130 to 150 (IGIT…VMAF), 173 to 193 (VFLP…VPQT), 246 to 266 (MSNI…PFTY), 278 to 298 (ILFV…TTSE), 374 to 394 (AGFV…GLMV), 412 to 432 (LIAV…ALAL), 483 to 503 (LVMF…AASL), and 525 to 545 (GIFI…MLVL).

This sequence belongs to the KdpA family. As to quaternary structure, the system is composed of three essential subunits: KdpA, KdpB and KdpC.

It is found in the cell membrane. Functionally, part of the high-affinity ATP-driven potassium transport (or Kdp) system, which catalyzes the hydrolysis of ATP coupled with the electrogenic transport of potassium into the cytoplasm. This subunit binds the extracellular potassium ions and delivers the ions to the membrane domain of KdpB through an intramembrane tunnel. The protein is Potassium-transporting ATPase potassium-binding subunit of Bacillus cereus (strain ATCC 10987 / NRS 248).